Here is a 161-residue protein sequence, read N- to C-terminus: Cytochrome c-type biogenesis protein CcmE (161 aa).

Residues 1–8 (MNARRKKR) lie on the Cytoplasmic side of the membrane. A helical; Signal-anchor for type II membrane protein transmembrane segment spans residues 9–29 (LALATALIGGVAAIASLLLYA). Topologically, residues 30–161 (LNSNLNLFYT…DYNAEQKSGY (132 aa)) are periplasmic. The heme site is built by His131 and Tyr135.

Belongs to the CcmE/CycJ family.

Its subcellular location is the cell inner membrane. Heme chaperone required for the biogenesis of c-type cytochromes. Transiently binds heme delivered by CcmC and transfers the heme to apo-cytochromes in a process facilitated by CcmF and CcmH. This chain is Cytochrome c-type biogenesis protein CcmE, found in Shewanella woodyi (strain ATCC 51908 / MS32).